An 814-amino-acid polypeptide reads, in one-letter code: Transcription factor oryO (814 aa).

Disordered stretches follow at residues 1–59 (MTAR…PACN) and 699–723 (PMDGSSTGLSDRTPPSESELSSIPP). Composition is skewed to polar residues over residues 16 to 27 (ANPTVRDQTQQD) and 49 to 59 (QPDNTSSPACN). Residues 58–85 (CNQCRTRKIRCDRQQPKCSNCRRADVEC) constitute a DNA-binding region (zn(2)-C6 fungal-type). Over residues 713–723 (PSESELSSIPP) the composition is skewed to low complexity.

The protein localises to the nucleus. In terms of biological role, transcription factor that regulates the expression of the gene cluster that mediates the biosynthesis of oryzines, natural products with an unusual maleidride backbone. This is Transcription factor oryO from Aspergillus oryzae (strain ATCC 42149 / RIB 40) (Yellow koji mold).